Consider the following 230-residue polypeptide: Pyridoxal phosphate homeostasis protein (230 aa).

Lysine 36 carries the post-translational modification N6-(pyridoxal phosphate)lysine.

It belongs to the pyridoxal phosphate-binding protein YggS/PROSC family.

Functionally, perhaps involved in proline biosynthesis. Its function is as follows. Pyridoxal 5'-phosphate (PLP)-binding protein, which is involved in PLP homeostasis. The protein is Pyridoxal phosphate homeostasis protein of Pseudomonas aeruginosa (strain ATCC 15692 / DSM 22644 / CIP 104116 / JCM 14847 / LMG 12228 / 1C / PRS 101 / PAO1).